Consider the following 140-residue polypeptide: Protein S40-1 (140 aa).

Positions 16–58 (YFPIRRREDGNEKENNRPVDFRENSERVWNKSSRRSKTTPLPS) are disordered. Basic and acidic residues predominate over residues 20-44 (RRREDGNEKENNRPVDFRENSERVW).

The protein belongs to the senescence regulator S40 family.

It localises to the cytoplasm. The chain is Protein S40-1 from Arabidopsis thaliana (Mouse-ear cress).